The following is a 251-amino-acid chain: Ubiquinone/menaquinone biosynthesis C-methyltransferase UbiE (251 aa).

S-adenosyl-L-methionine-binding positions include T74, D95, 123-124 (NA), and S140.

Belongs to the class I-like SAM-binding methyltransferase superfamily. MenG/UbiE family.

The catalysed reaction is a 2-demethylmenaquinol + S-adenosyl-L-methionine = a menaquinol + S-adenosyl-L-homocysteine + H(+). It carries out the reaction a 2-methoxy-6-(all-trans-polyprenyl)benzene-1,4-diol + S-adenosyl-L-methionine = a 5-methoxy-2-methyl-3-(all-trans-polyprenyl)benzene-1,4-diol + S-adenosyl-L-homocysteine + H(+). Its pathway is quinol/quinone metabolism; menaquinone biosynthesis; menaquinol from 1,4-dihydroxy-2-naphthoate: step 2/2. It participates in cofactor biosynthesis; ubiquinone biosynthesis. Its function is as follows. Methyltransferase required for the conversion of demethylmenaquinol (DMKH2) to menaquinol (MKH2) and the conversion of 2-polyprenyl-6-methoxy-1,4-benzoquinol (DDMQH2) to 2-polyprenyl-3-methyl-6-methoxy-1,4-benzoquinol (DMQH2). The sequence is that of Ubiquinone/menaquinone biosynthesis C-methyltransferase UbiE from Photorhabdus laumondii subsp. laumondii (strain DSM 15139 / CIP 105565 / TT01) (Photorhabdus luminescens subsp. laumondii).